Reading from the N-terminus, the 124-residue chain is NADH-quinone oxidoreductase subunit K (124 aa).

The next 3 membrane-spanning stretches (helical) occupy residues 28 to 48 (MEHG…GVMV), 52 to 72 (FLFM…AFIV), and 84 to 104 (IMFI…LAIL).

Belongs to the complex I subunit 4L family. As to quaternary structure, NDH-1 is composed of 14 different subunits. Subunits NuoA, H, J, K, L, M, N constitute the membrane sector of the complex.

It is found in the cell inner membrane. The catalysed reaction is a quinone + NADH + 5 H(+)(in) = a quinol + NAD(+) + 4 H(+)(out). Functionally, NDH-1 shuttles electrons from NADH, via FMN and iron-sulfur (Fe-S) centers, to quinones in the respiratory chain. The immediate electron acceptor for the enzyme in this species is believed to be ubiquinone. Couples the redox reaction to proton translocation (for every two electrons transferred, four hydrogen ions are translocated across the cytoplasmic membrane), and thus conserves the redox energy in a proton gradient. The sequence is that of NADH-quinone oxidoreductase subunit K from Psychrobacter sp. (strain PRwf-1).